Here is a 554-residue protein sequence, read N- to C-terminus: Hydroxylamine reductase (554 aa).

Residues Cys-3, Cys-6, Cys-18, and Cys-25 each contribute to the [2Fe-2S] cluster site. Positions 252, 276, 320, 408, 436, 461, 495, and 497 each coordinate hybrid [4Fe-2O-2S] cluster. Position 408 is a cysteine persulfide (Cys-408).

The protein belongs to the HCP family. Requires [2Fe-2S] cluster as cofactor. The cofactor is hybrid [4Fe-2O-2S] cluster.

It is found in the cytoplasm. The catalysed reaction is A + NH4(+) + H2O = hydroxylamine + AH2 + H(+). Functionally, catalyzes the reduction of hydroxylamine to form NH(3) and H(2)O. This chain is Hydroxylamine reductase, found in Photobacterium profundum (strain SS9).